A 297-amino-acid polypeptide reads, in one-letter code: Probable endonuclease 4 (297 aa).

Zn(2+) is bound by residues His69, His110, Glu145, Asp179, His182, His214, Asp227, His229, and Glu259.

The protein belongs to the AP endonuclease 2 family. It depends on Zn(2+) as a cofactor.

The enzyme catalyses Endonucleolytic cleavage to 5'-phosphooligonucleotide end-products.. Endonuclease IV plays a role in DNA repair. It cleaves phosphodiester bonds at apurinic or apyrimidinic (AP) sites, generating a 3'-hydroxyl group and a 5'-terminal sugar phosphate. This is Probable endonuclease 4 from Bacillus subtilis (strain 168).